We begin with the raw amino-acid sequence, 1499 residues long: Ring canal kelch homolog (1499 aa).

A compositionally biased stretch (polar residues) spans 56-66 (LDESSQKQLPR). The disordered stretch occupies residues 56–75 (LDESSQKQLPRSNGKEKTTG). One can recognise a BTB domain in the interval 100–166 (CDVVLVAEGI…VYRAVVEVTE (67 aa)). 6 Kelch repeats span residues 351 to 396 (VLLV…VLGD), 397 to 443 (KVYA…VLNN), 444 to 490 (CIYA…VVNG), 492 to 539 (LYAV…VLDN), 541 to 586 (LYAV…AHNG), and 588 to 634 (LYVV…MIDK). Residue U637 is a non-standard amino acid, selenocysteine. Disordered regions lie at residues 679–714 (AGQAAGFGNDDENSQAEGLNPEPANSNNSAPNGNNV), 750–786 (LQYAVLNQPQPGPSGLGPGQAHRSLGGERGAVGGGGG), 825–856 (AGYDVPRGRPAPSYYQNQPPTGPSANGRCPNL), 984–1017 (NQSNSSSASSASPYGANGPATTSQPNPTKDSSSV), 1033–1085 (SMNN…GNGG), 1107–1160 (ASTS…PVDV), 1301–1321 (QVGRARSESPSRPPGSDPLRT), and 1334–1499 (ARSP…TASE). A compositionally biased stretch (low complexity) spans 698–713 (NPEPANSNNSAPNGNN). Residues 776-786 (GERGAVGGGGG) show a composition bias toward gly residues. Positions 986–1003 (SNSSSASSASPYGANGPA) are enriched in low complexity. Polar residues predominate over residues 1004 to 1017 (TTSQPNPTKDSSSV). Residues 1040–1054 (SSAAHGTASGSAPAA) show a composition bias toward low complexity. The segment covering 1065–1085 (ISGGASGGGAGGAGSSGGNGG) has biased composition (gly residues). Positions 1107–1119 (ASTSTTLGGKSTG) are enriched in low complexity. Residues 1135–1147 (GPSDPTAGTSAPQ) show a composition bias toward polar residues. Residues 1348-1359 (NREKPREVRRIT) show a composition bias toward basic and acidic residues. The span at 1401–1410 (SSASSSSDSD) shows a compositional bias: low complexity. Positions 1460–1471 (VGSSSNETSDSL) are enriched in polar residues.

It localises to the cytoplasm. It is found in the cytoskeleton. In terms of biological role, may play a role in organizing the actin cytoskeleton. In Anopheles stephensi (Indo-Pakistan malaria mosquito), this protein is Ring canal kelch homolog.